Reading from the N-terminus, the 447-residue chain is Probable glycine dehydrogenase (decarboxylating) subunit 1 (447 aa).

Belongs to the GcvP family. N-terminal subunit subfamily. In terms of assembly, the glycine cleavage system is composed of four proteins: P, T, L and H. In this organism, the P 'protein' is a heterodimer of two subunits.

The catalysed reaction is N(6)-[(R)-lipoyl]-L-lysyl-[glycine-cleavage complex H protein] + glycine + H(+) = N(6)-[(R)-S(8)-aminomethyldihydrolipoyl]-L-lysyl-[glycine-cleavage complex H protein] + CO2. Its function is as follows. The glycine cleavage system catalyzes the degradation of glycine. The P protein binds the alpha-amino group of glycine through its pyridoxal phosphate cofactor; CO(2) is released and the remaining methylamine moiety is then transferred to the lipoamide cofactor of the H protein. This is Probable glycine dehydrogenase (decarboxylating) subunit 1 from Azorhizobium caulinodans (strain ATCC 43989 / DSM 5975 / JCM 20966 / LMG 6465 / NBRC 14845 / NCIMB 13405 / ORS 571).